The chain runs to 202 residues: Recombination protein RecR (202 aa).

Residues cysteine 56 to cysteine 71 form a C4-type zinc finger. A Toprim domain is found at threonine 79–proline 179.

This sequence belongs to the RecR family.

In terms of biological role, may play a role in DNA repair. It seems to be involved in an RecBC-independent recombinational process of DNA repair. It may act with RecF and RecO. This Nocardia farcinica (strain IFM 10152) protein is Recombination protein RecR.